The chain runs to 530 residues: S-adenosylhomocysteine hydrolase-like protein 1 (530 aa).

Met1 is subject to N-acetylmethionine. Residue Ser2 is modified to N-acetylserine. Ser2 is subject to Phosphoserine. Lys40 is modified (N6-acetyllysine). The disordered stretch occupies residues Lys53 to Ser103. Over residues Ser64–Asp83 the composition is skewed to low complexity. A PEST region spans residues Arg65–Arg92. A phosphoserine mark is found at Ser68, Ser71, Ser74, Ser77, and Ser84. The tract at residues Gln138–Lys201 is interaction with BCL2L10. Thr155, Asp229, Glu254, Lys284, and Asp288 together coordinate substrate. An NAD binding region spans residues Ser281–Ser448. NAD(+)-binding positions include Gly318 to Val322, Glu341, and Asn376. Ser391 is subject to Phosphoserine. Met397–His399 contributes to the NAD(+) binding site. A PDZ-binding region spans residues Asn520–Tyr530.

It belongs to the adenosylhomocysteinase family. As to quaternary structure, forms multimers. Forms heteromultimers with AHCYL2 (via the C-terminal region). Interacts (when phosphorylated) with ITPR1 (when not phosphorylated); the interaction suppresses inositol 1,4,5-trisphosphate binding to ITPR1. Interacts with BCL2L10; this strengthens the interaction of AHCYL1 with ITPR1. Interacts with CFTR and SLC26A6; the interactions take place once AHCYL1 is released from ITPR1 and increase CFTR and SLC26A6 activities. Interacts with RRM1; in a phosphorylation- and (dATP)-dependent manner. Interacts (via PEST domain when phosphorylated) with SLC4A4 isoform 1 but not isoform 2; the interaction increases SLC4A4 isoform 1 activity. Interacts (when phosphorylated) with SLC9A3; the interaction is required for SLC9A3 apical location and activity. Interacts (when phosphorylated) with FIP1L1; the interaction is direct and associates AHCYL1 with the CPSF complex and RNA. Interacts with PAPOLA. Interacts with ZCCHC4. Interacts with AHCY. It depends on NAD(+) as a cofactor. Post-translationally, phosphorylated at Ser/Thr residues between Ser-68 and Thr-72 in the PEST region: required for interaction with dATP-bound RRM1 and ITPR1. Phosphorylation at Ser-68 by PRKD1 and CAMK4 is required for further phosphorylations by CSNK1A1. Phosphorylation is induced by oxidative stress. Probably phosphorylated by CAMK2A; phosphorylation at Ser-68 may be required for interaction with SLC9A3. Dephosphorylated in response to apoptotic stress conditions which causes translocation of both AHCYL1 and BCL2L10 from mitochondria-associated endoplasmic reticulum membranes and promotes apoptosis. As to expression, expressed in dendritic cells.

It is found in the endoplasmic reticulum. The protein resides in the cytoplasm. Its subcellular location is the cytosol. The protein localises to the apical cell membrane. It localises to the microsome. In terms of biological role, multifaceted cellular regulator which coordinates several essential cellular functions including regulation of epithelial HCO3(-) and fluid secretion, mRNA processing and DNA replication. Regulates ITPR1 sensitivity to inositol 1,4,5-trisphosphate, competing for the common binding site and acting as endogenous 'pseudoligand' whose inhibitory activity can be modulated by its phosphorylation status. Promotes the formation of contact points between the endoplasmic reticulum (ER) and mitochondria, facilitating transfer of Ca(2+) from the ER to mitochondria. Under normal cellular conditions, functions cooperatively with BCL2L10 to limit ITPR1-mediated Ca(2+) release but, under apoptotic stress conditions, dephosphorylated which promotes dissociation of both AHCYL1 and BCL2L10 from mitochondria-associated endoplasmic reticulum membranes, inhibits BCL2L10 interaction with ITPR1 and leads to increased Ca(2+) transfer to mitochondria which promotes apoptosis. In the pancreatic and salivary ducts, at resting state, attenuates inositol 1,4,5-trisphosphate-induced calcium release by interacting with ITPR1. When extracellular stimuli induce ITPR1 phosphorylation or inositol 1,4,5-trisphosphate production, dissociates from ITPR1 to interact with CFTR and SLC26A6, mediating their synergistic activation by calcium and cAMP that stimulates the epithelial secretion of electrolytes and fluid. Also activates basolateral SLC4A4 isoform 1 to coordinate fluid and HCO3(-) secretion. Inhibits the effect of STK39 on SLC4A4 and CFTR by recruiting PP1 phosphatase which activates SLC4A4, SLC26A6 and CFTR through dephosphorylation. Mediates the induction of SLC9A3 surface expression produced by Angiotensin-2. Depending on the cell type, activates SLC9A3 in response to calcium or reverses SLC9A3R2-dependent calcium inhibition. May modulate the polyadenylation state of specific mRNAs, both by controlling the subcellular location of FIP1L1 and by inhibiting PAPOLA activity, in response to a stimulus that alters its phosphorylation state. Acts as a (dATP)-dependent inhibitor of ribonucleotide reductase large subunit RRM1, controlling the endogenous dNTP pool and ensuring normal cell cycle progression. In vitro does not exhibit any S-adenosyl-L-homocysteine hydrolase activity. This chain is S-adenosylhomocysteine hydrolase-like protein 1, found in Homo sapiens (Human).